Reading from the N-terminus, the 579-residue chain is Type IV pilus assembly ATPase PilB (579 aa).

Residue 340-345 coordinates ATP; the sequence is GSGKTV. Zn(2+) is bound by residues cysteine 470, cysteine 473, cysteine 507, and cysteine 510.

Belongs to the GSP E family. In terms of assembly, interacts with CpiA.

It is found in the cytoplasm. Its activity is regulated as follows. Inhibited by the inhibitory protein CpiA. In terms of biological role, ATPase component of the type IV pilus (T4P). Acts as a molecular motor to provide the energy that is required for biogenesis of the pilus and the extrusion of substrates generated in the cytoplasm. PilB is required for optimal T4P extension and, consequently, efficient natural transformation. May promote processive T4P extension. This chain is Type IV pilus assembly ATPase PilB, found in Acinetobacter baylyi (strain ATCC 33305 / BD413 / ADP1).